The chain runs to 565 residues: Mannosyl-oligosaccharide 1,2-alpha-mannosidase (565 aa).

Cysteines 320 and 363 form a disulfide. Glu-378 acts as the Proton donor in catalysis. Residue Thr-501 participates in Ca(2+) binding. Basic and acidic residues-rich tracts occupy residues 526–538 and 550–565; these read NEKAQMRESKVID and KSADQEAKEIIEEIAG. Residues 526 to 565 form a disordered region; the sequence is NEKAQMRESKVIDKSNLPEAQPVDKSADQEAKEIIEEIAG.

This sequence belongs to the glycosyl hydrolase 47 family. It depends on Ca(2+) as a cofactor.

The catalysed reaction is N(4)-(alpha-D-Man-(1-&gt;2)-alpha-D-Man-(1-&gt;2)-alpha-D-Man-(1-&gt;3)-[alpha-D-Man-(1-&gt;2)-alpha-D-Man-(1-&gt;3)-[alpha-D-Man-(1-&gt;2)-alpha-D-Man-(1-&gt;6)]-alpha-D-Man-(1-&gt;6)]-beta-D-Man-(1-&gt;4)-beta-D-GlcNAc-(1-&gt;4)-beta-D-GlcNAc)-L-asparaginyl-[protein] (N-glucan mannose isomer 9A1,2,3B1,2,3) + 4 H2O = N(4)-(alpha-D-Man-(1-&gt;3)-[alpha-D-Man-(1-&gt;3)-[alpha-D-Man-(1-&gt;6)]-alpha-D-Man-(1-&gt;6)]-beta-D-Man-(1-&gt;4)-beta-D-GlcNAc-(1-&gt;4)-beta-D-GlcNAc)-L-asparaginyl-[protein] (N-glucan mannose isomer 5A1,2) + 4 beta-D-mannose. It carries out the reaction N(4)-(alpha-D-Man-(1-&gt;2)-alpha-D-Man-(1-&gt;2)-alpha-D-Man-(1-&gt;3)-[alpha-D-Man-(1-&gt;3)-[alpha-D-Man-(1-&gt;2)-alpha-D-Man-(1-&gt;6)]-alpha-D-Man-(1-&gt;6)]-beta-D-Man-(1-&gt;4)-beta-D-GlcNAc-(1-&gt;4)-beta-D-GlcNAc)-L-asparaginyl-[protein] (N-glucan mannose isomer 8A1,2,3B1,3) + 3 H2O = N(4)-(alpha-D-Man-(1-&gt;3)-[alpha-D-Man-(1-&gt;3)-[alpha-D-Man-(1-&gt;6)]-alpha-D-Man-(1-&gt;6)]-beta-D-Man-(1-&gt;4)-beta-D-GlcNAc-(1-&gt;4)-beta-D-GlcNAc)-L-asparaginyl-[protein] (N-glucan mannose isomer 5A1,2) + 3 beta-D-mannose. The protein operates within protein modification; protein glycosylation. Its function is as follows. Involved in the maturation of Asn-linked oligosaccharides. Trim a single alpha-1,2-linked mannose residue from Man(9)GlcNAc(2) to produce Man(8)GlcNAc(2). In Candida albicans (Yeast), this protein is Mannosyl-oligosaccharide 1,2-alpha-mannosidase (MNS1).